The sequence spans 207 residues: Urease accessory protein UreG (207 aa).

GTP is bound at residue 12–19 (GPVGAGKT).

This sequence belongs to the SIMIBI class G3E GTPase family. UreG subfamily. Homodimer. UreD, UreF and UreG form a complex that acts as a GTP-hydrolysis-dependent molecular chaperone, activating the urease apoprotein by helping to assemble the nickel containing metallocenter of UreC. The UreE protein probably delivers the nickel.

Its subcellular location is the cytoplasm. Functionally, facilitates the functional incorporation of the urease nickel metallocenter. This process requires GTP hydrolysis, probably effectuated by UreG. This Cereibacter sphaeroides (strain KD131 / KCTC 12085) (Rhodobacter sphaeroides) protein is Urease accessory protein UreG.